We begin with the raw amino-acid sequence, 276 residues long: 3' cyclic ADP-D-ribose synthase HopAM1 (276 aa).

Positions 20-38 are enriched in polar residues; that stretch reads VEASQVKSAGTSSTTNIDS. A disordered region spans residues 20–39; sequence VEASQVKSAGTSSTTNIDSK. A TIR domain region spans residues 165 to 214; it reads KNGIAHAKKMAFFITPEWLGSDFCKQEFQWLSETKNKDIKSAFVIFKDVD. Gln190 is a catalytic residue.

In terms of assembly, homodimer.

Its subcellular location is the host cytoplasm. The protein resides in the host cytosol. The enzyme catalyses NAD(+) = 3'cADPR + nicotinamide + H(+). In terms of biological role, NAD(+) hydrolase (NADase) that cleaves NAD(+) into nicotinamide and 3' cyclic ADP-D-ribose (3'cADPR, v2-cADPR). Upon infiltration of A.thaliana with this bacteria an effector-triggered immunity-like phenotype (ETI-like, cell death with severe chlorosis) is seen, 3'cADPR levels rise while NAD(+) levels remain constant. Plant immune responses are suppressed. Triggers hypersensitive response-like cell death in Nicotiana tabacum cv. Xanthi and N.benthamiana when transiently expressed, depletes NAD(+) in N.benthamiana. Causes cell death upon induction in yeast due to NAD(+) depletion and/or 3'cADPR itself. Transgenic A.thaliana expressing HopAM1 suppresses its plant immune system upon challenge; the plants produce 3'cADPR without significantly depleting NAD(+). The protein is 3' cyclic ADP-D-ribose synthase HopAM1 of Pseudomonas syringae pv. tomato (strain ATCC BAA-871 / DC3000).